A 940-amino-acid polypeptide reads, in one-letter code: Valine--tRNA ligase (940 aa).

The 'HIGH' region signature appears at 47-57 (PNVTGILHMGH). The short motif at 564–568 (KLSKS) is the 'KMSKS' region element. An ATP-binding site is contributed by Lys567. Residues 873–937 (VEHIAKEKTR…ELQSILDKLA (65 aa)) adopt a coiled-coil conformation.

It belongs to the class-I aminoacyl-tRNA synthetase family. ValS type 1 subfamily. Monomer.

Its subcellular location is the cytoplasm. The enzyme catalyses tRNA(Val) + L-valine + ATP = L-valyl-tRNA(Val) + AMP + diphosphate. Functionally, catalyzes the attachment of valine to tRNA(Val). As ValRS can inadvertently accommodate and process structurally similar amino acids such as threonine, to avoid such errors, it has a 'posttransfer' editing activity that hydrolyzes mischarged Thr-tRNA(Val) in a tRNA-dependent manner. This Chlamydia abortus (strain DSM 27085 / S26/3) (Chlamydophila abortus) protein is Valine--tRNA ligase.